The chain runs to 115 residues: Large ribosomal subunit protein bL19 (115 aa).

The protein belongs to the bacterial ribosomal protein bL19 family.

This protein is located at the 30S-50S ribosomal subunit interface and may play a role in the structure and function of the aminoacyl-tRNA binding site. This chain is Large ribosomal subunit protein bL19, found in Erwinia tasmaniensis (strain DSM 17950 / CFBP 7177 / CIP 109463 / NCPPB 4357 / Et1/99).